Consider the following 293-residue polypeptide: Glycerophosphodiester phosphodiesterase (293 aa).

The signal sequence occupies residues 1 to 26 (MRKNRILALFVLSLGLLSFMVTPVSA). The region spanning 38–290 (ILTVAHRGAS…NYPDLFHKVK (253 aa)) is the GP-PDE domain. H43 functions as the Proton acceptor in the catalytic mechanism. Positions 43, 44, and 70 each coordinate sn-glycerol 3-phosphate. Residues E70 and D72 each contribute to the Ca(2+) site. H85, E152, and Q188 together coordinate sn-glycerol 3-phosphate. The Proton donor role is filled by H85. Residue E152 coordinates Ca(2+).

This sequence belongs to the glycerophosphoryl diester phosphodiesterase family. Requires Ca(2+) as cofactor.

The protein resides in the secreted. It catalyses the reaction a sn-glycero-3-phosphodiester + H2O = an alcohol + sn-glycerol 3-phosphate + H(+). In terms of biological role, glycerophosphodiester phosphodiesterase hydrolyzes glycerophosphodiesters into glycerol-3-phosphate (G3P) and the corresponding alcohol. Involved in wall teichoic acid (WTA) metabolism during phosphate starvation. Catalyzes the degradation of WTA, enabling the utilization of WTA as a phosphate reserve under limiting conditions. Is highly selective for the poly(gylcerol phosphate) WTA backbone and catalyzes exolytic cleavage of individual monomer units. In vitro is active toward the WTA oligomer mimics glycerophosphoglycerol (GPG) and bis-glycerophosphoglycerol (bGPG). The protein is Glycerophosphodiester phosphodiesterase of Bacillus subtilis (strain 168).